The chain runs to 640 residues: Chaperone protein HtpG (640 aa).

An a; substrate-binding region spans residues 1-352 (MTEQTATQNY…SADLPLNVSR (352 aa)). The b stretch occupies residues 353–571 (ELLQESRDVK…DGELSPQLIR (219 aa)). Residues 572 to 640 (MLKQAGQAVP…VKRINSLLLK (69 aa)) are c.

It belongs to the heat shock protein 90 family. In terms of assembly, homodimer.

It localises to the cytoplasm. Its function is as follows. Molecular chaperone. Has ATPase activity. This chain is Chaperone protein HtpG, found in Acinetobacter baylyi (strain ATCC 33305 / BD413 / ADP1).